Here is a 472-residue protein sequence, read N- to C-terminus: Glutamyl-tRNA(Gln) amidotransferase subunit A (472 aa).

Catalysis depends on charge relay system residues Lys-69 and Ser-144. Ser-168 functions as the Acyl-ester intermediate in the catalytic mechanism.

The protein belongs to the amidase family. GatA subfamily. In terms of assembly, heterotrimer of A, B and C subunits.

It catalyses the reaction L-glutamyl-tRNA(Gln) + L-glutamine + ATP + H2O = L-glutaminyl-tRNA(Gln) + L-glutamate + ADP + phosphate + H(+). Allows the formation of correctly charged Gln-tRNA(Gln) through the transamidation of misacylated Glu-tRNA(Gln) in organisms which lack glutaminyl-tRNA synthetase. The reaction takes place in the presence of glutamine and ATP through an activated gamma-phospho-Glu-tRNA(Gln). In Sulfurisphaera tokodaii (strain DSM 16993 / JCM 10545 / NBRC 100140 / 7) (Sulfolobus tokodaii), this protein is Glutamyl-tRNA(Gln) amidotransferase subunit A.